A 459-amino-acid polypeptide reads, in one-letter code: Cysteine--tRNA ligase (459 aa).

Position 29 (cysteine 29) interacts with Zn(2+). The 'HIGH' region motif lies at 31–41 (PTVYDRAHIGN). Cysteine 209, histidine 234, and glutamate 238 together coordinate Zn(2+). The 'KMSKS' region motif lies at 267–271 (KMSKS). Lysine 270 lines the ATP pocket.

It belongs to the class-I aminoacyl-tRNA synthetase family. In terms of assembly, monomer. Requires Zn(2+) as cofactor.

The protein resides in the cytoplasm. It carries out the reaction tRNA(Cys) + L-cysteine + ATP = L-cysteinyl-tRNA(Cys) + AMP + diphosphate. The sequence is that of Cysteine--tRNA ligase from Rhodospirillum rubrum (strain ATCC 11170 / ATH 1.1.1 / DSM 467 / LMG 4362 / NCIMB 8255 / S1).